Consider the following 418-residue polypeptide: UPF0261 protein BMEII0128 (418 aa).

The protein belongs to the UPF0261 family.

The chain is UPF0261 protein BMEII0128 from Brucella melitensis biotype 1 (strain ATCC 23456 / CCUG 17765 / NCTC 10094 / 16M).